The chain runs to 1306 residues: Disease resistance protein Roq1 (1306 aa).

The region spanning 10-179 (RSYDVFLSFR…QILKDIFDKF (170 aa)) is the TIR domain. NAD(+)-binding positions include 19–24 (RGEDTR) and glycine 52. Residue glutamate 86 is part of the active site. Residues 198–417 (KKLSSLLRMD…IDRLKDNPEG (220 aa)) form the NB-ARC domain. LRR repeat units lie at residues 200-224 (LSSLLRMDLKGVRLVGIWGMGGVGK), 252-275 (LQHHTLLYLQKTLLSKLLKVEFVD), 417-440 (GEIMATLKISFDGLRDYEKSIFLD), 599-622 (PSKLVYLTMKGSSIIELWNGAKRL), 645-669 (ITNLERLILSSCDALVEVHPSVGFL), 670-693 (KNLILLNMDHCISLERLPAIIQSE), 716-739 (MTHLKKLDLTSTGIRELPASIEHL), 741-763 (SLENLQMHSCNQLVSLPSSIWRF), 784-807 (SNCTRELILKLVSIKELPTSIGNL), 808-831 (TSLNFLEICNCKTISSLSSSIWGL), 832-857 (TSLTTLKLLDCRKLKNLPGIPNAINH), 878-902 (LDLLRIIDMSWCSCISSLPHNIWML), 904-926 (FLRILCISYCSRLEYLPENLGHL), 927-949 (EHLEELLADGTGILRLPSSVARL), 961-983 (FAIGPKVQYSSSMLNLPDDVFGS), 987-1010 (LGSVVKLNLSGNGFCNLPETMNQL), 1013-1036 (LEYLDITFCQRLEALPELPPSIKE), and 1045-1070 (LRIMEDLVIKCKELNLIAVTKIEYQN).

Belongs to the disease resistance TIR-NB-LRR family. Homodimer.

It carries out the reaction NAD(+) + H2O = ADP-D-ribose + nicotinamide + H(+). It catalyses the reaction NAD(+) = 2'cADPR + nicotinamide + H(+). Disease resistance (R) protein that specifically recognizes the Xanthomonas and Pseudomonas effector proteins XopQ and HopQ1, and triggers cell death. An NAD(+) hydrolase (NADase): in response to activation, catalyzes cleavage of NAD(+) into ADP-D-ribose (ADPR) and nicotinamide; NAD(+) cleavage triggers a defense system that promotes cell death. Makes small amounts of 2' cyclic ADPR (2'cADPR). The sequence is that of Disease resistance protein Roq1 from Nicotiana benthamiana.